The primary structure comprises 431 residues: 23S rRNA (uracil(1939)-C(5))-methyltransferase RlmD (431 aa).

Residues 10–68 enclose the TRAM domain; it reads RVTTRQIITVKVNDLDSFGQGVARHNGKALFIPGLLPEESAEVIITEDKKQFARARVSR. 4 residues coordinate [4Fe-4S] cluster: cysteine 81, cysteine 87, cysteine 90, and cysteine 161. Residues glutamine 264, phenylalanine 293, asparagine 298, glutamate 314, asparagine 341, and aspartate 362 each coordinate S-adenosyl-L-methionine. Cysteine 388 serves as the catalytic Nucleophile.

Belongs to the class I-like SAM-binding methyltransferase superfamily. RNA M5U methyltransferase family. RlmD subfamily.

It carries out the reaction uridine(1939) in 23S rRNA + S-adenosyl-L-methionine = 5-methyluridine(1939) in 23S rRNA + S-adenosyl-L-homocysteine + H(+). Its function is as follows. Catalyzes the formation of 5-methyl-uridine at position 1939 (m5U1939) in 23S rRNA. The protein is 23S rRNA (uracil(1939)-C(5))-methyltransferase RlmD of Salmonella typhimurium (strain LT2 / SGSC1412 / ATCC 700720).